A 338-amino-acid polypeptide reads, in one-letter code: Ketol-acid reductoisomerase (NADP(+)) (338 aa).

The KARI N-terminal Rossmann domain occupies 1–181 (MKVYYENDAD…GGTKAGVIET (181 aa)). Residues 24–27 (FGSQ), Lys-47, Ser-50, Ser-52, and 82–85 (DQVQ) each bind NADP(+). His-107 is an active-site residue. An NADP(+)-binding site is contributed by Gly-133. A KARI C-terminal knotted domain is found at 182–327 (NFKDETETDL…EKLRGMMSWL (146 aa)). 4 residues coordinate Mg(2+): Asp-190, Glu-194, Glu-226, and Glu-230. Ser-251 lines the substrate pocket.

The protein belongs to the ketol-acid reductoisomerase family. Mg(2+) is required as a cofactor.

The enzyme catalyses (2R)-2,3-dihydroxy-3-methylbutanoate + NADP(+) = (2S)-2-acetolactate + NADPH + H(+). The catalysed reaction is (2R,3R)-2,3-dihydroxy-3-methylpentanoate + NADP(+) = (S)-2-ethyl-2-hydroxy-3-oxobutanoate + NADPH + H(+). Its pathway is amino-acid biosynthesis; L-isoleucine biosynthesis; L-isoleucine from 2-oxobutanoate: step 2/4. It participates in amino-acid biosynthesis; L-valine biosynthesis; L-valine from pyruvate: step 2/4. Functionally, involved in the biosynthesis of branched-chain amino acids (BCAA). Catalyzes an alkyl-migration followed by a ketol-acid reduction of (S)-2-acetolactate (S2AL) to yield (R)-2,3-dihydroxy-isovalerate. In the isomerase reaction, S2AL is rearranged via a Mg-dependent methyl migration to produce 3-hydroxy-3-methyl-2-ketobutyrate (HMKB). In the reductase reaction, this 2-ketoacid undergoes a metal-dependent reduction by NADPH to yield (R)-2,3-dihydroxy-isovalerate. In Chloroherpeton thalassium (strain ATCC 35110 / GB-78), this protein is Ketol-acid reductoisomerase (NADP(+)).